Here is a 330-residue protein sequence, read N- to C-terminus: Beta-ketoacyl-[acyl-carrier-protein] synthase III (330 aa).

Catalysis depends on residues Cys116 and His257. The segment at 258-262 (QANQR) is ACP-binding. Residue Asn287 is part of the active site.

This sequence belongs to the thiolase-like superfamily. FabH family. In terms of assembly, homodimer.

The protein localises to the cytoplasm. The enzyme catalyses malonyl-[ACP] + acetyl-CoA + H(+) = 3-oxobutanoyl-[ACP] + CO2 + CoA. It functions in the pathway lipid metabolism; fatty acid biosynthesis. Catalyzes the condensation reaction of fatty acid synthesis by the addition to an acyl acceptor of two carbons from malonyl-ACP. Catalyzes the first condensation reaction which initiates fatty acid synthesis and may therefore play a role in governing the total rate of fatty acid production. Possesses both acetoacetyl-ACP synthase and acetyl transacylase activities. Its substrate specificity determines the biosynthesis of branched-chain and/or straight-chain of fatty acids. This Synechocystis sp. (strain ATCC 27184 / PCC 6803 / Kazusa) protein is Beta-ketoacyl-[acyl-carrier-protein] synthase III.